A 201-amino-acid polypeptide reads, in one-letter code: Pro-P-factor (201 aa).

An N-terminal signal peptide occupies residues 1–20 (MKITAVIALLFSLAAASPIP). 5 consecutive propeptides follow at residues 21-31 (VADPGVVSVSK), 58-65 (EFEAAPAK), 92-99 (EFEAAPEK), 126-133 (EFEAAPAK), and 160-201 (TEED…KFES). 2 N-linked (GlcNAc...) asparagine glycosylation sites follow: asparagine 187 and asparagine 194.

Proteolytically cleaved by kpr, probably at the C-terminal side of dibasic Lys-Arg residues. In terms of processing, glycosylated. Most of the precursor molecules are glycosylated on at least one site, but only a small proportion are glycosylated on both sites.

It is found in the secreted. Functionally, in h- cells under nutritional starvation, P-factor induces alteration of cell morphology toward mating, arrest of the cell cycle at the G1 phase prior to the initiation of DNA synthesis and indirect transcriptional activation of the sxa2 gene which down-regulates the signaling pathway. This chain is Pro-P-factor (map2), found in Schizosaccharomyces pombe (strain 972 / ATCC 24843) (Fission yeast).